The chain runs to 348 residues: Zinc transporter ZIP13 (348 aa).

Topologically, residues 1-45 are cytoplasmic; that stretch reads MMIQTAVAQAKTAPAGPGPWSIKDLVDLQYLDELMSIDNLDVWFC. A helical transmembrane segment spans residues 46 to 66; it reads SLVGSIAIGLSGIFPLLVIPI. At 67 to 83 the chain is on the lumenal side; it reads EAGTALKTEAGCQKLKK. Residues 84–104 traverse the membrane as a helical segment; it reads LLSFAIGGLLGDVFLHLLPEA. Residues 105-118 lie on the Cytoplasmic side of the membrane; it reads WAYTSSPGGSHRHY. A helical membrane pass occupies residues 119 to 139; sequence CTQGLWVIGGLMSFLTLEKMF. Residues 140–219 lie on the Lumenal side of the membrane; the sequence is PDEVGDPETK…CIDNFTHGLA (80 aa). Residues 144–192 are disordered; it reads GDPETKTSFQRTTSSSSDLSSQFSVSPQTNGICSNNNSDSKPKTDISPY. The segment covering 149–169 has biased composition (low complexity); the sequence is KTSFQRTTSSSSDLSSQFSVS. Over residues 170–182 the composition is skewed to polar residues; it reads PQTNGICSNNNSD. The helical transmembrane segment at 220 to 240 threads the bilayer; sequence VAGSFLVSRKVGFLTTFAILL. The short motif at 241–246 is the XEXPHE-motif element; that stretch reads HEIPHE. Topologically, residues 241-262 are cytoplasmic; it reads HEIPHEVGDFAILLRAGFDRWK. The chain crosses the membrane as a helical span at residues 263-283; sequence AARMQLSTALGGVLGACFALC. Over 284-294 the chain is Lumenal; that stretch reads SQSQHGAENAT. A helical membrane pass occupies residues 295 to 315; it reads TWILPFTSGGFLYIALVNVVP. Over 316–326 the chain is Cytoplasmic; it reads DLLEETNPRNS. The helical transmembrane segment at 327 to 347 threads the bilayer; sequence LLQVLLLFSGIGVMALLSIAM. Residue D348 is a topological domain, lumenal.

This sequence belongs to the ZIP transporter (TC 2.A.5) family. Homodimer.

It is found in the golgi apparatus membrane. The protein localises to the cytoplasmic vesicle membrane. The protein resides in the endoplasmic reticulum membrane. The catalysed reaction is Zn(2+)(in) = Zn(2+)(out). In terms of biological role, functions as a zinc transporter transporting Zn(2+) from the Golgi apparatus to the cytosol and thus influences the zinc level at least in areas of the cytosol. The protein is Zinc transporter ZIP13 of Danio rerio (Zebrafish).